A 129-amino-acid chain; its full sequence is Small ribosomal subunit protein uS11 (129 aa).

Belongs to the universal ribosomal protein uS11 family. As to quaternary structure, part of the 30S ribosomal subunit. Interacts with proteins S7 and S18. Binds to IF-3.

Located on the platform of the 30S subunit, it bridges several disparate RNA helices of the 16S rRNA. Forms part of the Shine-Dalgarno cleft in the 70S ribosome. This is Small ribosomal subunit protein uS11 from Pasteurella multocida (strain Pm70).